The primary structure comprises 252 residues: tRNA (guanine-N(1)-)-methyltransferase (252 aa).

S-adenosyl-L-methionine is bound by residues G113 and I133–L138.

This sequence belongs to the RNA methyltransferase TrmD family. As to quaternary structure, homodimer.

It localises to the cytoplasm. It catalyses the reaction guanosine(37) in tRNA + S-adenosyl-L-methionine = N(1)-methylguanosine(37) in tRNA + S-adenosyl-L-homocysteine + H(+). Functionally, specifically methylates guanosine-37 in various tRNAs. The protein is tRNA (guanine-N(1)-)-methyltransferase of Baumannia cicadellinicola subsp. Homalodisca coagulata.